The sequence spans 589 residues: Glucose starvation modulator protein 1 (589 aa).

Positions 20 to 48 (CVFCHQKHLQCSNERPCKNCVKRNIGHEC) form a DNA-binding region, zn(2)-C6 fungal-type. 3 disordered regions span residues 59–90 (LTGNGKGSSSKTKTPRKKLKSTPITASSPSVA), 218–240 (NNSNNTSHNDNFIAQNNNNNPEP), and 340–362 (ANGQTEDLLDHNKDDSRKNPGNG). Over residues 80–90 (TPITASSPSVA) the composition is skewed to polar residues. Basic and acidic residues predominate over residues 347–357 (LLDHNKDDSRK). In terms of domain architecture, PAS spans 471-542 (SLLDYKKLVE…FKFFKNIAVN (72 aa)).

Belongs to the ERT1/acuK family.

The protein localises to the nucleus. Functionally, transcription factor which regulates nonfermentable carbon utilization. The protein is Glucose starvation modulator protein 1 (GSM1) of Candida tropicalis (strain ATCC MYA-3404 / T1) (Yeast).